The following is a 307-amino-acid chain: Ribonuclease Z (307 aa).

Residues His-62, His-64, Asp-66, His-67, His-139, Asp-210, and His-268 each contribute to the Zn(2+) site. Residue Asp-66 is the Proton acceptor of the active site.

The protein belongs to the RNase Z family. Homodimer. The cofactor is Zn(2+).

It carries out the reaction Endonucleolytic cleavage of RNA, removing extra 3' nucleotides from tRNA precursor, generating 3' termini of tRNAs. A 3'-hydroxy group is left at the tRNA terminus and a 5'-phosphoryl group is left at the trailer molecule.. Functionally, zinc phosphodiesterase, which displays some tRNA 3'-processing endonuclease activity. Probably involved in tRNA maturation, by removing a 3'-trailer from precursor tRNA. In Myxococcus xanthus (strain DK1622), this protein is Ribonuclease Z.